A 468-amino-acid chain; its full sequence is Ribulose bisphosphate carboxylase large chain (468 aa).

Position 7 is an N6,N6,N6-trimethyllysine (lysine 7). Substrate contacts are provided by asparagine 116 and threonine 166. Lysine 168 (proton acceptor) is an active-site residue. Residue lysine 170 coordinates substrate. The Mg(2+) site is built by lysine 194, aspartate 196, and glutamate 197. Lysine 194 is subject to N6-carboxylysine. Histidine 287 functions as the Proton acceptor in the catalytic mechanism. Substrate contacts are provided by arginine 288, histidine 320, and serine 372.

The protein belongs to the RuBisCO large chain family. Type I subfamily. In terms of assembly, heterohexadecamer of 8 large chains and 8 small chains. Mg(2+) serves as cofactor.

It localises to the plastid. The protein localises to the chloroplast. It catalyses the reaction 2 (2R)-3-phosphoglycerate + 2 H(+) = D-ribulose 1,5-bisphosphate + CO2 + H2O. The enzyme catalyses D-ribulose 1,5-bisphosphate + O2 = 2-phosphoglycolate + (2R)-3-phosphoglycerate + 2 H(+). In terms of biological role, ruBisCO catalyzes two reactions: the carboxylation of D-ribulose 1,5-bisphosphate, the primary event in carbon dioxide fixation, as well as the oxidative fragmentation of the pentose substrate in the photorespiration process. Both reactions occur simultaneously and in competition at the same active site. This Couroupita guianensis (Cannonball tree) protein is Ribulose bisphosphate carboxylase large chain.